We begin with the raw amino-acid sequence, 136 residues long: uncharacterized protein (136 aa).

This is an uncharacterized protein from Frog virus 3 (isolate Goorha) (FV-3).